A 189-amino-acid chain; its full sequence is Chitin synthase 1 (189 aa).

It belongs to the chitin synthase family. Class I subfamily.

It is found in the cell membrane. It catalyses the reaction [(1-&gt;4)-N-acetyl-beta-D-glucosaminyl](n) + UDP-N-acetyl-alpha-D-glucosamine = [(1-&gt;4)-N-acetyl-beta-D-glucosaminyl](n+1) + UDP + H(+). Polymerizes chitin, a structural polymer of the cell wall and septum, by transferring the sugar moiety of UDP-GlcNAc to the non-reducing end of the growing chitin polymer. This Ajellomyces capsulatus (Darling's disease fungus) protein is Chitin synthase 1 (CHS1).